We begin with the raw amino-acid sequence, 337 residues long: DNA replication regulator sld2 (337 aa).

2 positions are modified to phosphothreonine; by cdc2: Thr-60 and Thr-74. Positions 71–97 are disordered; sequence KFQTPTKQRAETEANESPKAPRNDYLQ. Ser-87 is subject to Phosphoserine; by cdc2. Thr-99 and Thr-154 each carry phosphothreonine; by cdc2. The residue at position 183 (Ser-183) is a Phosphoserine. The segment at 258–302 is disordered; that stretch reads SMNLSKSHLEGLPEIDEDAENGIDDNEDTTASKDSSPFLDLQSER. Positions 270–285 are enriched in acidic residues; sequence PEIDEDAENGIDDNED.

This sequence belongs to the SLD2 family. Interacts with rad4. Post-translationally, phosphorylated by cdc2 at the onset of S-phase.

It is found in the cytoplasm. It localises to the nucleus. In terms of biological role, has a role in the initiation of DNA replication. Required at S-phase checkpoint. This chain is DNA replication regulator sld2 (drc1), found in Schizosaccharomyces pombe (strain 972 / ATCC 24843) (Fission yeast).